We begin with the raw amino-acid sequence, 371 residues long: Leu/Ile/Val-binding protein homolog 1 (371 aa).

A signal peptide spans 1-23 (MRKTLFSGVALAAVIAFGGSAWA).

The protein belongs to the leucine-binding protein family.

Component of an amino-acid transport system. The polypeptide is Leu/Ile/Val-binding protein homolog 1 (Brucella melitensis biotype 1 (strain ATCC 23456 / CCUG 17765 / NCTC 10094 / 16M)).